A 434-amino-acid chain; its full sequence is Glutamate-1-semialdehyde 2,1-aminomutase 2 (434 aa).

An N6-(pyridoxal phosphate)lysine modification is found at Lys-270.

It belongs to the class-III pyridoxal-phosphate-dependent aminotransferase family. HemL subfamily. In terms of assembly, homodimer. Pyridoxal 5'-phosphate serves as cofactor.

The protein resides in the cytoplasm. It carries out the reaction (S)-4-amino-5-oxopentanoate = 5-aminolevulinate. The protein operates within porphyrin-containing compound metabolism; protoporphyrin-IX biosynthesis; 5-aminolevulinate from L-glutamyl-tRNA(Glu): step 2/2. This Bacillus cereus (strain G9842) protein is Glutamate-1-semialdehyde 2,1-aminomutase 2.